A 111-amino-acid chain; its full sequence is Nucleoid-associated protein PFL_1905 (111 aa).

Disordered stretches follow at residues 1–20 and 88–111; these read MKGG…EKMA and SNSQ…KLPF.

This sequence belongs to the YbaB/EbfC family. Homodimer.

Its subcellular location is the cytoplasm. It is found in the nucleoid. Functionally, binds to DNA and alters its conformation. May be involved in regulation of gene expression, nucleoid organization and DNA protection. In Pseudomonas fluorescens (strain ATCC BAA-477 / NRRL B-23932 / Pf-5), this protein is Nucleoid-associated protein PFL_1905.